Reading from the N-terminus, the 397-residue chain is MSPSFLVLLTILGPGNSLQLQDPWGHETKEAPGPVHLRERRQVVGDDDFEDPDYTYNTDPPELLKNVTNTVAAHPELPTTVVMLERDSTSAGTSERATEKIATTDPTAPGTGGTAVGMLSTDSATQWSLTSVETVQPASTEVETSQPAPMEAETSQPAPMEAETSQPAPMEAETSQPAPMEADTSQPAPMEAETSQPAPNEAETSKPAPTEAETSKPAPTEAETTQLPRIQAVKTLFTTSAATEVPSTEPTTMETASTESNESTIFLGPSVTHLPDSGLKKGLIVTPGNSPAPTLPGSSDLIPVKQCLLIILILASLATIFLVCTVVLAVRLSRKTHMYPVRNYSPTEMICISSLLPEGGDGAPVTANGGLPKVQDLKTEPSGDRDGDDLTLHSFLP.

A signal peptide spans 1–17 (MSPSFLVLLTILGPGNS). The propeptide occupies 18–41 (LQLQDPWGHETKEAPGPVHLRERR). Residues 18–307 (LQLQDPWGHE…SSDLIPVKQC (290 aa)) are Extracellular-facing. Tyr-54 is subject to Sulfotyrosine. A glycan (O-linked (GalNAc...) threonine) is linked at Thr-58. The N-linked (GlcNAc...) asparagine glycan is linked to Asn-66. The tract at residues 89 to 261 (TSAGTSERAT…TMETASTESN (173 aa)) is disordered. Polar residues predominate over residues 120–198 (STDSATQWSL…PMEAETSQPA (79 aa)). 10 consecutive repeat copies span residues 126–135 (QWSLTSVETV), 136–145 (QPASTEVETS), 146–155 (QPAPMEAETS), 156–165 (QPAPMEAETS), 166–175 (QPAPMEAETS), 176–185 (QPAPMEADTS), 186–195 (QPAPMEAETS), 196–205 (QPAPNEAETS), 206–215 (KPAPTEAETS), and 216–225 (KPAPTEAETT). The tract at residues 126–225 (QWSLTSVETV…KPAPTEAETT (100 aa)) is 10 X 10 AA tandem repeats. Residues 236–261 (LFTTSAATEVPSTEPTTMETASTESN) show a composition bias toward polar residues. An N-linked (GlcNAc...) asparagine glycan is attached at Asn-261. A helical membrane pass occupies residues 308-328 (LLIILILASLATIFLVCTVVL). Over 329 to 397 (AVRLSRKTHM…DDLTLHSFLP (69 aa)) the chain is Cytoplasmic. The segment at 364 to 390 (PVTANGGLPKVQDLKTEPSGDRDGDDL) is disordered. Basic and acidic residues predominate over residues 375–390 (QDLKTEPSGDRDGDDL). At Thr-391 the chain carries Phosphothreonine. Position 394 is a phosphoserine (Ser-394).

As to quaternary structure, homodimer; disulfide-linked. Interacts with P- and E-selectins, through their lectin/EGF domains. Interaction with P-selectin requires sialyl Lewis X glycan modification and tyrosine sulfation, probably on Tyr-54, for high affinity binding. Dimerization appears not to be required for P-selectin/SELP binding. Interacts with SNX20. Interacts with MSN and SYK; mediates SYK activation downstream of SELPLG. Interacts with HAVCR1. In terms of processing, displays complex, core-2, sialylated and fucosylated O-linked oligosaccharides, at least some of which appear to contain poly-N-acetyllactosamine with varying degrees of substitution. Mainly disialylated or neutral forms of the core-2 tetrasaccharide, Galbeta1--&gt;4GlcNAcbeta1--&gt;6(Galbeta1--&gt;3)GalNAcOH. The GlcN:GalN ratio is approximately 2:1 and the Man:Fuc ratio 3:5. Contains about 14% fucose with alpha-1,3 linkage present in two forms: One species is a disialylated, monofucosylated glycan, and the other, a monosialylated, trifucosylated glycan with a polylactosamine backbone. The fucosylated forms carry the Lewis antigen and are important for interaction with selectins and for functioning. No sulfated O-glycans. Some N-glycosylation. In terms of tissue distribution, highly expressed in blood, bone marrow, brain, adipose tissue, spleen, and thymus. Also expressed in heart, kidney, liver, muscle, ovary, and stomach.

The protein resides in the cell membrane. Its function is as follows. An SLe(x)-type proteoglycan, which through high affinity, calcium-dependent interactions with E- and P-selectins, mediates rapid rolling of leukocytes over vascular surfaces during the initial steps in inflammation. Critical for the initial leukocyte capture. This Mus musculus (Mouse) protein is P-selectin glycoprotein ligand 1 (Selplg).